Reading from the N-terminus, the 343-residue chain is Allergin-1 (343 aa).

The first 19 residues, 1–19, serve as a signal peptide directing secretion; sequence MWSHLNRLLFWSIFSSVTC. Residues 20-227 lie on the Extracellular side of the membrane; sequence RKAVLDCEAM…GGDSCPFCLK (208 aa). Ig-like C2-type domains follow at residues 35–118 and 128–213; these read PSPC…RDFS and PVLN…HPVT. N51, N60, N89, N151, N157, and N182 each carry an N-linked (GlcNAc...) asparagine glycan. Intrachain disulfides connect C56–C103 and C147–C196. Residues 228-248 form a helical membrane-spanning segment; it reads LLLPGLLLLLVVIILILAFWV. The Cytoplasmic portion of the chain corresponds to 249–343; it reads LPKYKTRKAM…SGYVYSELNF (95 aa). 2 short sequence motifs (ITIM motif) span residues 311–316 and 336–341; these read LQYATP and YVYSEL. Residues Y313 and Y338 each carry the phosphotyrosine modification.

In terms of assembly, monomer. Interacts (tyrosine-phosphorylated) with PTPN6, PTPN11 and INPP5D. In terms of processing, N-glycosylated. Expressed in myeloid cells (dendritic cells, macrophages and neutrophils, weak expression on B-cells but not in T-cells or natural killer cells), peripheral blood basophils and mast cells (at protein level).

The protein localises to the cell membrane. Immunoglobulin-like receptor which plays an inhibitory role in degranulation of mast cells. Negatively regulates IgE-mediated mast cell activation and suppresses the type I immediate hypersensitivity reaction. The sequence is that of Allergin-1 (MILR1) from Homo sapiens (Human).